The following is an 887-amino-acid chain: Leucine--tRNA ligase (887 aa).

The short motif at 48–58 is the 'HIGH' region element; it reads PYPSGKLHMGH. The 'KMSKS' region motif lies at 644-648; sequence TMSKS. An ATP-binding site is contributed by Lys647.

The protein belongs to the class-I aminoacyl-tRNA synthetase family.

It is found in the cytoplasm. The catalysed reaction is tRNA(Leu) + L-leucine + ATP = L-leucyl-tRNA(Leu) + AMP + diphosphate. This Leptothrix cholodnii (strain ATCC 51168 / LMG 8142 / SP-6) (Leptothrix discophora (strain SP-6)) protein is Leucine--tRNA ligase.